The following is a 329-amino-acid chain: Strigolactones hydrolase CXE15 (329 aa).

The Involved in the stabilization of the negatively charged intermediate by the formation of the oxyanion hole signature appears at 83–85 (HGG). (-)-2'-epi-GR24-binding residues include Gly-85, Gly-86, Ser-169, and Ser-170. Ser-169 acts as the Nucleophile in catalysis. Residues Glu-271 and His-302 contribute to the active site.

Belongs to the 'GDXG' lipolytic enzyme family. In terms of tissue distribution, expressed in axillary buds, leaves, stems, hypocotyls, flowers, siliques, and vasculatures of shoots and roots.

It localises to the nucleus. The protein localises to the cytoplasm. Its subcellular location is the cytosol. It carries out the reaction (-)-2'-epi-GR24 + H2O = (-)-2'-epi-GR24 ABC-rings + 5-hydroxy-3-methylfuran-2(5H)-one. It catalyses the reaction 5-deoxystrigol + H2O = 5-deoxystrigol ABC-rings + 5-hydroxy-3-methylfuran-2(5H)-one. The catalysed reaction is orobanchol + H2O = orobanchol ABC-rings + 5-hydroxy-3-methylfuran-2(5H)-one. Binds to strigolactones (SLs) such as (-)-2'-epi-GR24(4DO), 5-deoxystrigol (5DS) and orobanchol, and catalyzes their hydrolysis; SL are phytohormones controlling shoot branching and communications between plants and microorganisms. Promotes shoot branching by dampening SL-inhibited axillary bud outgrowth. The polypeptide is Strigolactones hydrolase CXE15 (Arabidopsis thaliana (Mouse-ear cress)).